The following is a 49-amino-acid chain: Light-harvesting protein B-875 beta chain (49 aa).

The Cytoplasmic portion of the chain corresponds to 2–27 (ADKSDLGYTGLTDEQAQELHSVYMSG). Residues H21 and H39 each coordinate a bacteriochlorophyll. A helical; Signal-anchor for type II membrane protein transmembrane segment spans residues 28–45 (LWLFSAVAIVAHLAVYIW). Residues 46 to 49 (RPWF) are Periplasmic-facing.

The protein belongs to the antenna complex beta subunit family. In terms of assembly, the core complex is formed by different alpha and beta chains, binding bacteriochlorophyll molecules, and arranged most probably in tetrameric structures disposed around the reaction center. The non-pigmented gamma chains may constitute additional components.

The protein localises to the cell inner membrane. Antenna complexes are light-harvesting systems, which transfer the excitation energy to the reaction centers. In Cereibacter sphaeroides (strain ATCC 17023 / DSM 158 / JCM 6121 / CCUG 31486 / LMG 2827 / NBRC 12203 / NCIMB 8253 / ATH 2.4.1.) (Rhodobacter sphaeroides), this protein is Light-harvesting protein B-875 beta chain (pufB).